A 1873-amino-acid chain; its full sequence is SAGA complex subunit Spt20 (1873 aa).

It belongs to the SPT20 family. Component of the Spt-Ada-Gcn5 acetyltransferase (SAGA) complex consisting of wda/Taf5L, Saf6, Taf9, Taf10b, Taf12, Ada1, Spt3, Spt7, Spt20, Sf3b3, Sf3b5, Nipped-A/Tra1, a histone acetyltransferase (HAT) module made up of Gcn5, Ada2b (Isoform B), Ada3 and Sgf29, and a deubiquitinase (DUB) module made up of not/nonstop, Sgf11 and e(y)2 tethered to SAGA by Atxn7.

It is found in the nucleus. In terms of biological role, component of the transcription regulatory complex SAGA, a multiprotein complex that activates transcription by remodeling chromatin and mediating histone acetylation and deubiquitination. The SAGA complex predominantly acetylates histone H3. The sequence is that of SAGA complex subunit Spt20 from Drosophila melanogaster (Fruit fly).